The sequence spans 270 residues: Phosphatidylglycerol--prolipoprotein diacylglyceryl transferase (270 aa).

A run of 3 helical transmembrane segments spans residues 17–37, 63–83, and 95–115; these read LAIHWYGLTYLAAFGLFMFLG, ILFLGVLGVVVGGRLGYCLFY, and IFYIWQGGMSFHGGLLGVIAS. Residue arginine 146 participates in a 1,2-diacyl-sn-glycero-3-phospho-(1'-sn-glycerol) binding. A run of 3 helical transmembrane segments spans residues 182-202, 209-229, and 243-263; these read SQVYQFLMEGLLLFVLLWLYA, GEVAAAFLVGYGCFRFIAEYF, and MSMGQWLCVPMIVAGVLLWVW.

The protein belongs to the Lgt family.

It is found in the cell inner membrane. It carries out the reaction L-cysteinyl-[prolipoprotein] + a 1,2-diacyl-sn-glycero-3-phospho-(1'-sn-glycerol) = an S-1,2-diacyl-sn-glyceryl-L-cysteinyl-[prolipoprotein] + sn-glycerol 1-phosphate + H(+). Its pathway is protein modification; lipoprotein biosynthesis (diacylglyceryl transfer). Functionally, catalyzes the transfer of the diacylglyceryl group from phosphatidylglycerol to the sulfhydryl group of the N-terminal cysteine of a prolipoprotein, the first step in the formation of mature lipoproteins. The protein is Phosphatidylglycerol--prolipoprotein diacylglyceryl transferase of Paracidovorax citrulli (strain AAC00-1) (Acidovorax citrulli).